The chain runs to 118 residues: V-type proton ATPase subunit G 1 (118 aa).

A2 bears the N-acetylalanine mark.

The protein belongs to the V-ATPase G subunit family. As to quaternary structure, V-ATPase is a heteromultimeric enzyme made up of two complexes: the ATP-hydrolytic V1 complex and the proton translocation V0 complex. The V1 complex consists of three catalytic AB heterodimers that form a heterohexamer, three peripheral stalks each consisting of EG heterodimers, one central rotor including subunits D and F, and the regulatory subunits C and H. The proton translocation complex V0 consists of the proton transport subunit a, a ring of proteolipid subunits c9c'', rotary subunit d, subunits e and f, and the accessory subunits ATP6AP1/Ac45 and ATP6AP2/PRR. Kidney; localizes to early distal nephron, encompassing thick ascending limbs and distal convoluted tubules (at protein level). Ubiquitous.

The protein resides in the apical cell membrane. In terms of biological role, subunit of the V1 complex of vacuolar(H+)-ATPase (V-ATPase), a multisubunit enzyme composed of a peripheral complex (V1) that hydrolyzes ATP and a membrane integral complex (V0) that translocates protons. V-ATPase is responsible for acidifying and maintaining the pH of intracellular compartments and in some cell types, is targeted to the plasma membrane, where it is responsible for acidifying the extracellular environment. In aerobic conditions, involved in intracellular iron homeostasis, thus triggering the activity of Fe(2+) prolyl hydroxylase (PHD) enzymes, and leading to HIF1A hydroxylation and subsequent proteasomal degradation. This chain is V-type proton ATPase subunit G 1 (Atp6v1g1), found in Mus musculus (Mouse).